Reading from the N-terminus, the 264-residue chain is Thiazole synthase (264 aa).

Lys106 serves as the catalytic Schiff-base intermediate with DXP. 1-deoxy-D-xylulose 5-phosphate contacts are provided by residues Gly167, 193-194 (AG), and 215-216 (NS).

Belongs to the ThiG family. Homotetramer. Forms heterodimers with either ThiH or ThiS.

It is found in the cytoplasm. It carries out the reaction [ThiS sulfur-carrier protein]-C-terminal-Gly-aminoethanethioate + 2-iminoacetate + 1-deoxy-D-xylulose 5-phosphate = [ThiS sulfur-carrier protein]-C-terminal Gly-Gly + 2-[(2R,5Z)-2-carboxy-4-methylthiazol-5(2H)-ylidene]ethyl phosphate + 2 H2O + H(+). It functions in the pathway cofactor biosynthesis; thiamine diphosphate biosynthesis. Functionally, catalyzes the rearrangement of 1-deoxy-D-xylulose 5-phosphate (DXP) to produce the thiazole phosphate moiety of thiamine. Sulfur is provided by the thiocarboxylate moiety of the carrier protein ThiS. In vitro, sulfur can be provided by H(2)S. The chain is Thiazole synthase from Ectopseudomonas mendocina (strain ymp) (Pseudomonas mendocina).